Consider the following 120-residue polypeptide: Large ribosomal subunit protein uL18 (120 aa).

It belongs to the universal ribosomal protein uL18 family. As to quaternary structure, part of the 50S ribosomal subunit; part of the 5S rRNA/L5/L18/L25 subcomplex. Contacts the 5S and 23S rRNAs.

Functionally, this is one of the proteins that bind and probably mediate the attachment of the 5S RNA into the large ribosomal subunit, where it forms part of the central protuberance. This is Large ribosomal subunit protein uL18 from Geobacillus sp. (strain WCH70).